The sequence spans 150 residues: Large ribosomal subunit protein bL9 (150 aa).

Belongs to the bacterial ribosomal protein bL9 family.

Functionally, binds to the 23S rRNA. The protein is Large ribosomal subunit protein bL9 of Serratia proteamaculans (strain 568).